Here is a 98-residue protein sequence, read N- to C-terminus: NADH-ubiquinone oxidoreductase chain 4L (98 aa).

The next 3 membrane-spanning stretches (helical) occupy residues 1–21, 26–46, and 59–79; these read MTPTHFTISSAFLLGMMGLAF, LLSALLCLEAMMLALFIALSL, and APMLMLAFSACEASAGLALLV.

It belongs to the complex I subunit 4L family.

It localises to the mitochondrion membrane. It carries out the reaction a ubiquinone + NADH + 5 H(+)(in) = a ubiquinol + NAD(+) + 4 H(+)(out). Core subunit of the mitochondrial membrane respiratory chain NADH dehydrogenase (Complex I) which catalyzes electron transfer from NADH through the respiratory chain, using ubiquinone as an electron acceptor. Part of the enzyme membrane arm which is embedded in the lipid bilayer and involved in proton translocation. This chain is NADH-ubiquinone oxidoreductase chain 4L (MT-ND4L), found in Gadus morhua (Atlantic cod).